Reading from the N-terminus, the 228-residue chain is 7-cyano-7-deazaguanine synthase (228 aa).

8-18 (LSGGLDSTTCL) lines the ATP pocket. 4 residues coordinate Zn(2+): Cys-188, Cys-198, Cys-201, and Cys-204.

This sequence belongs to the QueC family. Zn(2+) serves as cofactor.

The catalysed reaction is 7-carboxy-7-deazaguanine + NH4(+) + ATP = 7-cyano-7-deazaguanine + ADP + phosphate + H2O + H(+). Its pathway is purine metabolism; 7-cyano-7-deazaguanine biosynthesis. In terms of biological role, catalyzes the ATP-dependent conversion of 7-carboxy-7-deazaguanine (CDG) to 7-cyano-7-deazaguanine (preQ(0)). The polypeptide is 7-cyano-7-deazaguanine synthase (Legionella pneumophila (strain Paris)).